We begin with the raw amino-acid sequence, 219 residues long: Translation initiation factor IF-3 (219 aa).

Belongs to the IF-3 family. As to quaternary structure, monomer.

Its subcellular location is the cytoplasm. Functionally, IF-3 binds to the 30S ribosomal subunit and shifts the equilibrium between 70S ribosomes and their 50S and 30S subunits in favor of the free subunits, thus enhancing the availability of 30S subunits on which protein synthesis initiation begins. The protein is Translation initiation factor IF-3 of Prochlorococcus marinus (strain MIT 9313).